The following is a 133-amino-acid chain: Transcriptional regulator MraZ (133 aa).

SpoVT-AbrB domains lie at 5–47 and 76–119; these read TYEH…SKDD and TVEI…SKNK.

The protein belongs to the MraZ family. As to quaternary structure, forms oligomers.

It is found in the cytoplasm. Its subcellular location is the nucleoid. This is Transcriptional regulator MraZ from Mycoplasma mycoides subsp. mycoides SC (strain CCUG 32753 / NCTC 10114 / PG1).